Reading from the N-terminus, the 481-residue chain is Aspartyl/glutamyl-tRNA(Asn/Gln) amidotransferase subunit B (481 aa).

The protein belongs to the GatB/GatE family. GatB subfamily. As to quaternary structure, heterotrimer of A, B and C subunits.

It carries out the reaction L-glutamyl-tRNA(Gln) + L-glutamine + ATP + H2O = L-glutaminyl-tRNA(Gln) + L-glutamate + ADP + phosphate + H(+). The enzyme catalyses L-aspartyl-tRNA(Asn) + L-glutamine + ATP + H2O = L-asparaginyl-tRNA(Asn) + L-glutamate + ADP + phosphate + 2 H(+). Allows the formation of correctly charged Asn-tRNA(Asn) or Gln-tRNA(Gln) through the transamidation of misacylated Asp-tRNA(Asn) or Glu-tRNA(Gln) in organisms which lack either or both of asparaginyl-tRNA or glutaminyl-tRNA synthetases. The reaction takes place in the presence of glutamine and ATP through an activated phospho-Asp-tRNA(Asn) or phospho-Glu-tRNA(Gln). The polypeptide is Aspartyl/glutamyl-tRNA(Asn/Gln) amidotransferase subunit B (Ectopseudomonas mendocina (strain ymp) (Pseudomonas mendocina)).